Consider the following 282-residue polypeptide: Probable endonuclease 4 (282 aa).

Zn(2+) is bound by residues histidine 69, histidine 109, glutamate 145, aspartate 179, histidine 182, histidine 216, aspartate 229, histidine 231, and glutamate 261.

The protein belongs to the AP endonuclease 2 family. It depends on Zn(2+) as a cofactor.

It catalyses the reaction Endonucleolytic cleavage to 5'-phosphooligonucleotide end-products.. Its function is as follows. Endonuclease IV plays a role in DNA repair. It cleaves phosphodiester bonds at apurinic or apyrimidinic (AP) sites, generating a 3'-hydroxyl group and a 5'-terminal sugar phosphate. The sequence is that of Probable endonuclease 4 from Edwardsiella ictaluri (strain 93-146).